The sequence spans 238 residues: Large ribosomal subunit protein uL2 (238 aa).

A disordered region spans residues 201–238 (FGGGGHQHPGRPKTIARGTSPGRTVGHVAARQTGRSRK).

The protein belongs to the universal ribosomal protein uL2 family. In terms of assembly, part of the 50S ribosomal subunit. Forms a bridge to the 30S subunit in the 70S ribosome.

Its function is as follows. One of the primary rRNA binding proteins. Required for association of the 30S and 50S subunits to form the 70S ribosome, for tRNA binding and peptide bond formation. It has been suggested to have peptidyltransferase activity; this is somewhat controversial. Makes several contacts with the 16S rRNA in the 70S ribosome. This is Large ribosomal subunit protein uL2 from Methanoregula boonei (strain DSM 21154 / JCM 14090 / 6A8).